A 490-amino-acid chain; its full sequence is Protein nucleotidyltransferase YdiU (490 aa).

ATP is bound by residues Gly94, Gly96, Arg97, Lys117, Asp129, Gly130, Arg180, and Arg187. The active-site Proton acceptor is the Asp256. Residues Asn257 and Asp266 each coordinate Mg(2+). Asp266 provides a ligand contact to ATP.

It belongs to the SELO family. Mg(2+) serves as cofactor. Requires Mn(2+) as cofactor.

It carries out the reaction L-seryl-[protein] + ATP = 3-O-(5'-adenylyl)-L-seryl-[protein] + diphosphate. It catalyses the reaction L-threonyl-[protein] + ATP = 3-O-(5'-adenylyl)-L-threonyl-[protein] + diphosphate. The catalysed reaction is L-tyrosyl-[protein] + ATP = O-(5'-adenylyl)-L-tyrosyl-[protein] + diphosphate. The enzyme catalyses L-histidyl-[protein] + UTP = N(tele)-(5'-uridylyl)-L-histidyl-[protein] + diphosphate. It carries out the reaction L-seryl-[protein] + UTP = O-(5'-uridylyl)-L-seryl-[protein] + diphosphate. It catalyses the reaction L-tyrosyl-[protein] + UTP = O-(5'-uridylyl)-L-tyrosyl-[protein] + diphosphate. Its function is as follows. Nucleotidyltransferase involved in the post-translational modification of proteins. It can catalyze the addition of adenosine monophosphate (AMP) or uridine monophosphate (UMP) to a protein, resulting in modifications known as AMPylation and UMPylation. The protein is Protein nucleotidyltransferase YdiU of Clostridium perfringens (strain ATCC 13124 / DSM 756 / JCM 1290 / NCIMB 6125 / NCTC 8237 / Type A).